We begin with the raw amino-acid sequence, 930 residues long: Translation initiation factor IF-2 (930 aa).

Positions 50-67 (FKPAAAPKVEAKPAAPKV) are enriched in low complexity. 2 disordered regions span residues 50-217 (FKPA…SSEE) and 260-346 (EVVP…HELP). Basic and acidic residues-rich tracts occupy residues 68–90 (SAEK…EAKP) and 110–125 (FKAE…AERR). The span at 129 to 141 (KGNNRDQQQNGNR) shows a compositional bias: low complexity. Basic and acidic residues-rich tracts occupy residues 157-167 (RDNRRFNDQAK) and 262-295 (VPEK…DGPR). Positions 309–318 (NQKNSNWNNN) are enriched in low complexity. Positions 337 to 346 (VTERKFHELP) are enriched in basic and acidic residues. The tr-type G domain occupies 432–599 (ERPPVVTIMG…TVLLVAEIQE (168 aa)). The segment at 441–448 (GHVDHGKT) is G1. Residue 441 to 448 (GHVDHGKT) coordinates GTP. The tract at residues 466 to 470 (GITQH) is G2. The G3 stretch occupies residues 487–490 (DTPG). GTP is bound by residues 487 to 491 (DTPGH) and 541 to 544 (NKID). The interval 541–544 (NKID) is G4. Residues 577–579 (SAK) are G5.

It belongs to the TRAFAC class translation factor GTPase superfamily. Classic translation factor GTPase family. IF-2 subfamily.

The protein resides in the cytoplasm. In terms of biological role, one of the essential components for the initiation of protein synthesis. Protects formylmethionyl-tRNA from spontaneous hydrolysis and promotes its binding to the 30S ribosomal subunits. Also involved in the hydrolysis of GTP during the formation of the 70S ribosomal complex. In Streptococcus pneumoniae (strain P1031), this protein is Translation initiation factor IF-2.